A 983-amino-acid polypeptide reads, in one-letter code: Anion exchange protein 4 (983 aa).

The segment at 1–48 (MEMKLPGQEGFEASSAPRNIPSGELDSNPDPGTGPSPDGPSDTESKEL) is disordered. N-linked (GlcNAc...) asparagine glycosylation occurs at Asn183. 2 disordered regions span residues 186–205 (TGTRPCWGSTHPRKASDNEE) and 332–357 (RIPPPKCLPSQHKRLPSQQREIRGPA). 4 helical membrane passes run 415 to 435 (AVLYIYLATVTNAITFGGLLG), 443 to 463 (GVLESFLGTAVAGAAFCLMAG), 500 to 520 (VGIWVATFCLVLVATEASVLV), and 530 to 550 (GFCALISLIFIYDAVGKMLNL). Residues 415-983 (AVLYIYLATV…KAPEINISVN (569 aa)) are membrane (anion exchange). 2 N-linked (GlcNAc...) asparagine glycosylation sites follow: Asn576 and Asn600. 7 consecutive transmembrane segments (helical) span residues 624–644 (VPDIAFFSLLLFLTSFFFAMA), 665–685 (FSSVLAILLGCGLDAFLGLAT), 712–732 (PWWWSVAAALPALLLSILIFM), 758–778 (LFCVAVLMLLTSALGLPWYVS), 815–835 (GLVVFILTGASIFLAPVLKFI), 837–857 (MPVLYGIFLYMGVAALSSIQF), and 899–919 (LWIIKSTPAAIIFPLMLLGLV). A compositionally biased stretch (basic and acidic residues) spans 946-957 (RSIPEKGLEPEH). The disordered stretch occupies residues 946 to 983 (RSIPEKGLEPEHSFSGSDSEDSELMYQPKAPEINISVN). Asn979 carries N-linked (GlcNAc...) asparagine glycosylation.

The protein belongs to the anion exchanger (TC 2.A.31) family. In terms of tissue distribution, kidney specific.

It localises to the basolateral cell membrane. The enzyme catalyses 2 hydrogencarbonate(out) + chloride(in) + Na(+)(out) = 2 hydrogencarbonate(in) + chloride(out) + Na(+)(in). It catalyses the reaction K(+)(in) + 2 hydrogencarbonate(in) + chloride(out) = K(+)(out) + 2 hydrogencarbonate(out) + chloride(in). The catalysed reaction is Li(+)(in) + 2 hydrogencarbonate(in) + chloride(out) = Li(+)(out) + 2 hydrogencarbonate(out) + chloride(in). It carries out the reaction Rb(+)(in) + 2 hydrogencarbonate(in) + chloride(out) = Rb(+)(out) + 2 hydrogencarbonate(out) + chloride(in). The enzyme catalyses Cs(+)(in) + 2 hydrogencarbonate(in) + chloride(out) = Cs(+)(out) + 2 hydrogencarbonate(out) + chloride(in). In terms of biological role, electroneutral Cl(-)/HCO3(-) antiporter that favors chloride ion entry and efflux of hydrogencarbonate and sodium ion across the basolateral membrane and may participate in salivary secretion. Also mediates Cl(-)/HCO3(-) exchange activity in the presence of K(+) as well as Cs(+), Li(+), and Rb(+). Does not contribute to Cl(-)/HCO3(-) exchanger in the apical membrane of the upper villous epithelium. The protein is Anion exchange protein 4 of Homo sapiens (Human).